A 738-amino-acid chain; its full sequence is Catalase-peroxidase (738 aa).

Residues 1–24 form the signal peptide; that stretch reads MEPLFPKRLLSIAVLCVASATAQA. A cross-link (tryptophyl-tyrosyl-methioninium (Trp-Tyr) (with M-252)) is located at residues 104–226; the sequence is WHAAGTYRMI…FGATEMGLIY (123 aa). H105 serves as the catalytic Proton acceptor. Residues 191–213 are disordered; it reads EEVNWGPEGQWLTDRRHSGDRKL. The span at 203–213 shows a compositional bias: basic and acidic residues; sequence TDRRHSGDRKL. Residues 226–252 constitute a cross-link (tryptophyl-tyrosyl-methioninium (Tyr-Met) (with W-104)); that stretch reads YVNPEGPHGNPDPIAAAHDIRQAFGRM. A heme b-binding site is contributed by H267.

The protein belongs to the peroxidase family. Peroxidase/catalase subfamily. As to quaternary structure, homodimer or homotetramer. Heme b is required as a cofactor. In terms of processing, formation of the three residue Trp-Tyr-Met cross-link is important for the catalase, but not the peroxidase activity of the enzyme.

It catalyses the reaction H2O2 + AH2 = A + 2 H2O. It carries out the reaction 2 H2O2 = O2 + 2 H2O. Functionally, bifunctional enzyme with both catalase and broad-spectrum peroxidase activity. The chain is Catalase-peroxidase from Saccharophagus degradans (strain 2-40 / ATCC 43961 / DSM 17024).